Reading from the N-terminus, the 59-residue chain is UPF0434 protein VC_1876 (59 aa).

The protein belongs to the UPF0434 family.

The chain is UPF0434 protein VC_1876 from Vibrio cholerae serotype O1 (strain ATCC 39315 / El Tor Inaba N16961).